The sequence spans 416 residues: UDP-N-acetylglucosamine 1-carboxyvinyltransferase (416 aa).

22–23 (KN) is a binding site for phosphoenolpyruvate. Arginine 91 is a UDP-N-acetyl-alpha-D-glucosamine binding site. Cysteine 115 acts as the Proton donor in catalysis. Cysteine 115 bears the 2-(S-cysteinyl)pyruvic acid O-phosphothioketal mark. UDP-N-acetyl-alpha-D-glucosamine contacts are provided by residues 120–124 (RPIDL), aspartate 305, and isoleucine 327.

The protein belongs to the EPSP synthase family. MurA subfamily.

The protein resides in the cytoplasm. The catalysed reaction is phosphoenolpyruvate + UDP-N-acetyl-alpha-D-glucosamine = UDP-N-acetyl-3-O-(1-carboxyvinyl)-alpha-D-glucosamine + phosphate. It participates in cell wall biogenesis; peptidoglycan biosynthesis. Functionally, cell wall formation. Adds enolpyruvyl to UDP-N-acetylglucosamine. The protein is UDP-N-acetylglucosamine 1-carboxyvinyltransferase of Buchnera aphidicola subsp. Acyrthosiphon pisum (strain APS) (Acyrthosiphon pisum symbiotic bacterium).